The chain runs to 400 residues: MAGATVTVEEVRKAQRATGPATVLAIGTATPANCVYQADYPDYYFRITKSEHLTDLKEKFKRMCDKSMIRKRYMHLTEEFLAENPSMCAYMAPSLDARQDVVVVEVPKLGKAAAQKAIKEWGQPKSRITHLVFCTTSGVDMPGADYQLTKALGLRPSVNRLMMYQQGCFAGGTVLRVAKDLAENNRGARVLVVCSEITAVTFRGPSESHLDSLVGQALFGDGAAAVVVGADPDDRVERPLFQLVSAAQTILPDSEGAIDGHLREVGLTFHLLKDVPGLISKNIGRALDDAFKPLGISDWNSIFWVAHPGGPAILDQVEAKVGLDKARMRATRHVLSEYGNMSSACVLFILDEMRKRSAEDGQATTGEGLDWGVLFGFGPGLTVETVVLHSVPITTGAATA.

The active site involves C168.

It belongs to the thiolase-like superfamily. Chalcone/stilbene synthases family.

It carries out the reaction (E)-4-coumaroyl-CoA + 3 malonyl-CoA + 3 H(+) = 2',4,4',6'-tetrahydroxychalcone + 3 CO2 + 4 CoA. The protein operates within secondary metabolite biosynthesis; flavonoid biosynthesis. Its function is as follows. The primary product of this enzyme is 4,2',4',6'-tetrahydroxychalcone (also termed naringenin-chalcone or chalcone) which can under specific conditions spontaneously isomerize into naringenin. This is Chalcone synthase C2 (C2) from Zea mays (Maize).